Here is a 265-residue protein sequence, read N- to C-terminus: S-adenosylmethionine decarboxylase proenzyme (265 aa).

Ser-114 acts as the Schiff-base intermediate with substrate; via pyruvic acid in catalysis. Ser-114 carries the pyruvic acid (Ser); by autocatalysis modification. The Proton acceptor; for processing activity role is filled by His-119. Cys-142 serves as the catalytic Proton donor; for catalytic activity.

It belongs to the prokaryotic AdoMetDC family. Type 2 subfamily. In terms of assembly, heterooctamer of four alpha and four beta chains arranged as a tetramer of alpha/beta heterodimers. Pyruvate serves as cofactor. Is synthesized initially as an inactive proenzyme. Formation of the active enzyme involves a self-maturation process in which the active site pyruvoyl group is generated from an internal serine residue via an autocatalytic post-translational modification. Two non-identical subunits are generated from the proenzyme in this reaction, and the pyruvate is formed at the N-terminus of the alpha chain, which is derived from the carboxyl end of the proenzyme. The post-translation cleavage follows an unusual pathway, termed non-hydrolytic serinolysis, in which the side chain hydroxyl group of the serine supplies its oxygen atom to form the C-terminus of the beta chain, while the remainder of the serine residue undergoes an oxidative deamination to produce ammonia and the pyruvoyl group blocking the N-terminus of the alpha chain.

It carries out the reaction S-adenosyl-L-methionine + H(+) = S-adenosyl 3-(methylsulfanyl)propylamine + CO2. It functions in the pathway amine and polyamine biosynthesis; S-adenosylmethioninamine biosynthesis; S-adenosylmethioninamine from S-adenosyl-L-methionine: step 1/1. Catalyzes the decarboxylation of S-adenosylmethionine to S-adenosylmethioninamine (dcAdoMet), the propylamine donor required for the synthesis of the polyamines spermine and spermidine from the diamine putrescine. This chain is S-adenosylmethionine decarboxylase proenzyme, found in Buchnera aphidicola subsp. Acyrthosiphon pisum (strain 5A).